The sequence spans 184 residues: Guanylate kinase (184 aa).

A Guanylate kinase-like domain is found at 4-182; it reads MGLTVLSGPS…AAARLVALMI (179 aa). 11–18 is a binding site for ATP; it reads GPSGVGKD.

It belongs to the guanylate kinase family.

It is found in the cytoplasm. It carries out the reaction GMP + ATP = GDP + ADP. In terms of biological role, essential for recycling GMP and indirectly, cGMP. The protein is Guanylate kinase of Frankia casuarinae (strain DSM 45818 / CECT 9043 / HFP020203 / CcI3).